Here is a 412-residue protein sequence, read N- to C-terminus: 4-hydroxyphenylpyruvate dioxygenase (412 aa).

2 VOC domains span residues 31–179 (GYDH…LISR) and 209–369 (RIDH…LFTK). Residues histidine 212, histidine 295, and glutamate 380 each contribute to the Fe cation site.

It belongs to the 4HPPD family. Fe cation serves as cofactor.

It catalyses the reaction 3-(4-hydroxyphenyl)pyruvate + O2 = homogentisate + CO2. Its pathway is amino-acid degradation; L-phenylalanine degradation; acetoacetate and fumarate from L-phenylalanine: step 3/6. This Neurospora crassa (strain ATCC 24698 / 74-OR23-1A / CBS 708.71 / DSM 1257 / FGSC 987) protein is 4-hydroxyphenylpyruvate dioxygenase.